The following is a 43-amino-acid chain: Potassium channel toxin gamma-KTx 4.1 (43 aa).

4 disulfide bridges follow: Cys-5–Cys-23, Cys-11–Cys-34, Cys-20–Cys-39, and Cys-24–Cys-41.

This sequence belongs to the ergtoxin family. Gamma-KTx 4 subfamily. As to expression, expressed by the venom gland.

Its subcellular location is the secreted. Its function is as follows. Reversibly blocks Kv11/ERG potassium channels. The polypeptide is Potassium channel toxin gamma-KTx 4.1 (Centruroides limpidus (Mexican scorpion)).